Consider the following 625-residue polypeptide: UvrABC system protein C (625 aa).

Residues 26-105 (LEPGVYFLRD…IKQHQPHFNT (80 aa)) form the GIY-YIG domain. The region spanning 215-250 (GELLEKLATKMLAASENLDFEQAATIRDQIRGLQAL) is the UVR domain.

Belongs to the UvrC family. As to quaternary structure, interacts with UvrB in an incision complex.

It localises to the cytoplasm. Functionally, the UvrABC repair system catalyzes the recognition and processing of DNA lesions. UvrC both incises the 5' and 3' sides of the lesion. The N-terminal half is responsible for the 3' incision and the C-terminal half is responsible for the 5' incision. This is UvrABC system protein C from Microcystis aeruginosa (strain NIES-843 / IAM M-2473).